We begin with the raw amino-acid sequence, 387 residues long: Anhydro-N-acetylmuramic acid kinase (387 aa).

9–16 (GTSVDGID) provides a ligand contact to ATP.

This sequence belongs to the anhydro-N-acetylmuramic acid kinase family.

The catalysed reaction is 1,6-anhydro-N-acetyl-beta-muramate + ATP + H2O = N-acetyl-D-muramate 6-phosphate + ADP + H(+). It participates in amino-sugar metabolism; 1,6-anhydro-N-acetylmuramate degradation. The protein operates within cell wall biogenesis; peptidoglycan recycling. Functionally, catalyzes the specific phosphorylation of 1,6-anhydro-N-acetylmuramic acid (anhMurNAc) with the simultaneous cleavage of the 1,6-anhydro ring, generating MurNAc-6-P. Is required for the utilization of anhMurNAc either imported from the medium or derived from its own cell wall murein, and thus plays a role in cell wall recycling. The polypeptide is Anhydro-N-acetylmuramic acid kinase (Synechocystis sp. (strain ATCC 27184 / PCC 6803 / Kazusa)).